Reading from the N-terminus, the 156-residue chain is Dihydrofolate reductase (156 aa).

The DHFR domain occupies 1-156 (MLKLIWCQTL…VNYYSNKKEK (156 aa)).

Belongs to the dihydrofolate reductase family.

The catalysed reaction is (6S)-5,6,7,8-tetrahydrofolate + NADP(+) = 7,8-dihydrofolate + NADPH + H(+). It participates in cofactor biosynthesis; tetrahydrofolate biosynthesis; 5,6,7,8-tetrahydrofolate from 7,8-dihydrofolate: step 1/1. Its function is as follows. Key enzyme in folate metabolism. Catalyzes an essential reaction for de novo glycine and purine synthesis, and for DNA precursor synthesis. The polypeptide is Dihydrofolate reductase (folA) (Ureaplasma parvum serovar 3 (strain ATCC 700970)).